A 262-amino-acid chain; its full sequence is Tryptophan synthase alpha chain (262 aa).

Catalysis depends on proton acceptor residues glutamate 48 and aspartate 59.

Belongs to the TrpA family. In terms of assembly, tetramer of two alpha and two beta chains.

It carries out the reaction (1S,2R)-1-C-(indol-3-yl)glycerol 3-phosphate + L-serine = D-glyceraldehyde 3-phosphate + L-tryptophan + H2O. Its pathway is amino-acid biosynthesis; L-tryptophan biosynthesis; L-tryptophan from chorismate: step 5/5. Functionally, the alpha subunit is responsible for the aldol cleavage of indoleglycerol phosphate to indole and glyceraldehyde 3-phosphate. The sequence is that of Tryptophan synthase alpha chain from Helicobacter pylori (strain ATCC 700392 / 26695) (Campylobacter pylori).